The chain runs to 487 residues: Protein SMG9 (487 aa).

2 disordered regions span residues 30–83 and 136–164; these read EDAA…PPAL and RDKG…LQPP. Over residues 42–70 the composition is skewed to basic and acidic residues; it reads LKKDRDREQETWDRERDKDRKLERDREAE.

This sequence belongs to the SMG9 family.

In terms of biological role, involved in nonsense-mediated decay (NMD) of mRNAs containing premature stop codons. Probable component of kinase complex containing nonC and recruited to stalled ribosomes. The polypeptide is Protein SMG9 (Drosophila melanogaster (Fruit fly)).